A 172-amino-acid chain; its full sequence is NADH-ubiquinone oxidoreductase chain 6 (172 aa).

6 consecutive transmembrane segments (helical) span residues 1 to 21 (MLSLVLCFFVMFLLGVAVVVL), 25 to 45 (PYFSALGLVFVAVSGCFIVLY), 48 to 68 (GTFLSLVLVLLYLGGMMVVFV), 86 to 106 (VIWFFVICVLCICFAGYMSFN), 108 to 128 (FFLDVSVACEGADYTGGIFGA), and 141 to 161 (LILVLAGWALLVCLFSVLVVV).

The protein belongs to the complex I subunit 6 family.

It localises to the mitochondrion membrane. It catalyses the reaction a ubiquinone + NADH + 5 H(+)(in) = a ubiquinol + NAD(+) + 4 H(+)(out). Core subunit of the mitochondrial membrane respiratory chain NADH dehydrogenase (Complex I) that is believed to belong to the minimal assembly required for catalysis. Complex I functions in the transfer of electrons from NADH to the respiratory chain. The immediate electron acceptor for the enzyme is believed to be ubiquinone. This is NADH-ubiquinone oxidoreductase chain 6 (MT-ND6) from Petromyzon marinus (Sea lamprey).